The chain runs to 330 residues: CRISPR-associated endonuclease Cas1 2 (330 aa).

Residues E156, H222, and E237 each coordinate Mn(2+).

This sequence belongs to the CRISPR-associated endonuclease Cas1 family. Homodimer, forms a heterotetramer with a Cas2 homodimer. It depends on Mg(2+) as a cofactor. Mn(2+) is required as a cofactor.

CRISPR (clustered regularly interspaced short palindromic repeat), is an adaptive immune system that provides protection against mobile genetic elements (viruses, transposable elements and conjugative plasmids). CRISPR clusters contain spacers, sequences complementary to antecedent mobile elements, and target invading nucleic acids. CRISPR clusters are transcribed and processed into CRISPR RNA (crRNA). Acts as a dsDNA endonuclease. Involved in the integration of spacer DNA into the CRISPR cassette. This Thermodesulfovibrio yellowstonii (strain ATCC 51303 / DSM 11347 / YP87) protein is CRISPR-associated endonuclease Cas1 2.